The sequence spans 463 residues: FAD-dependent monooxygenase nodM (463 aa).

The helical transmembrane segment at 5–25 threads the bilayer; the sequence is EFKVIIVGGSLAGLTLAHCLL. Positions 35, 49, 108, 305, and 318 each coordinate FAD. The helical transmembrane segment at 438 to 458 threads the bilayer; the sequence is ILLGFTGVFTSALAMVVLLHI.

This sequence belongs to the paxM FAD-dependent monooxygenase family. FAD serves as cofactor.

The protein resides in the membrane. It functions in the pathway secondary metabolite biosynthesis. Its function is as follows. FAD-dependent monooxygenase; part of the gene cluster that mediates the biosynthesis of the indole diterpenes nodulisporic acids (NA). Nodulisporic acid A (NAA) and its chemically modified derivatives are of particular significance because of their highly potent insecticidal activity against blood-feeding arthropods and lack of observable adverse effects on mammals, in particular the tremogenicity associated with the paspaline-derived IDTs is not observed. The geranylgeranyl diphosphate (GGPP) synthase ggs1, localized outside of the cluster, is proposed to catalyze the first step in nodulisporic acid biosynthesis via conversion of farnesyl pyrophosphate and isopentyl pyrophosphate into geranylgeranyl pyrophosphate (GGPP). Condensation of indole-3-glycerol phosphate with GGPP by the prenyl transferase nodC then forms 3-geranylgeranylindole (3-GGI). Epoxidation by the FAD-dependent monooxygenase nodM leads to a single-epoxidized-GGI that is substrate of the terpene cyclase nodB for cyclization to yield emindole SB. The terminal methyl carbon, C28, of emindole SB is then oxidized by the cytochrome P450 monooxygenase nodW to produce nodulisporic acid F (NAF), the pentacyclic core of NAA. NAF is converted to nodulisporic acid E (NAE) via prenylation. This step is probably performed by one of the indole diterpene prenyltransferases nodD1 or nodD2. Several oxidation steps performed by the FAD-linked oxidoreductase nodO and one of the cytochrome P450 monooxygenase nodR, nodX or nodZ further convert NAE to nodulisporic acid D (NAD). NAD is substrate of cytochrome P450 monooxygenase nodJ to produce the precursor of nodulisporic acid C (NAC), converted to NAC by one of the indole diterpene prenyltransferases nodD1 or nodD2. The FAD-dependent monooxygenase nodY2 then oxidizes NAC to nodulisporic acid B (NAB). Finally NAB is converted to NAA by one of the cytochrome P450 monooxygenases nodR, nodX or nodZ. This is FAD-dependent monooxygenase nodM from Hypoxylon pulicicidum.